The sequence spans 364 residues: tRNA-specific 2-thiouridylase MnmA 2 (364 aa).

ATP is bound by residues 10–17 and Met36; that span reads GMSGGVDS. Cys106 acts as the Nucleophile in catalysis. The cysteines at positions 106 and 204 are disulfide-linked. Gly130 is an ATP binding site. An interaction with tRNA region spans residues 154–156; that stretch reads KDQ. The Cysteine persulfide intermediate role is filled by Cys204. The tract at residues 310–311 is interaction with tRNA; sequence RY.

It belongs to the MnmA/TRMU family.

The protein localises to the cytoplasm. The catalysed reaction is S-sulfanyl-L-cysteinyl-[protein] + uridine(34) in tRNA + AH2 + ATP = 2-thiouridine(34) in tRNA + L-cysteinyl-[protein] + A + AMP + diphosphate + H(+). In terms of biological role, catalyzes the 2-thiolation of uridine at the wobble position (U34) of tRNA, leading to the formation of s(2)U34. This is tRNA-specific 2-thiouridylase MnmA 2 from Caldanaerobacter subterraneus subsp. tengcongensis (strain DSM 15242 / JCM 11007 / NBRC 100824 / MB4) (Thermoanaerobacter tengcongensis).